A 122-amino-acid polypeptide reads, in one-letter code: Ig heavy chain V region M511 (122 aa).

The region spanning 1-114 (EVKLVESGGG…SYWYFDVWGA (114 aa)) is the Ig-like domain.

This is Ig heavy chain V region M511 from Mus musculus (Mouse).